Here is a 295-residue protein sequence, read N- to C-terminus: 4-hydroxy-tetrahydrodipicolinate synthase (295 aa).

T46 contributes to the pyruvate binding site. Y135 acts as the Proton donor/acceptor in catalysis. The Schiff-base intermediate with substrate role is filled by K164. I205 is a binding site for pyruvate.

It belongs to the DapA family. As to quaternary structure, homotetramer; dimer of dimers.

The protein localises to the cytoplasm. It catalyses the reaction L-aspartate 4-semialdehyde + pyruvate = (2S,4S)-4-hydroxy-2,3,4,5-tetrahydrodipicolinate + H2O + H(+). The protein operates within amino-acid biosynthesis; L-lysine biosynthesis via DAP pathway; (S)-tetrahydrodipicolinate from L-aspartate: step 3/4. Functionally, catalyzes the condensation of (S)-aspartate-beta-semialdehyde [(S)-ASA] and pyruvate to 4-hydroxy-tetrahydrodipicolinate (HTPA). The sequence is that of 4-hydroxy-tetrahydrodipicolinate synthase from Aliarcobacter butzleri (strain RM4018) (Arcobacter butzleri).